Reading from the N-terminus, the 512-residue chain is MRPSGEKVVKGHGQGNSGHSLSGMANYYRRKKGDAVFLNAKPLNSANAQAYLYGVRKYSIGLAERLDADYEAPPLDRKKSSDSTASNNPEFKPSVFYRNIDPINWFLRIIGVLPIVRHGPARAKFEMNSASFIYSVVFFVLLACYVGYVANNRIHIVRSLSGPFEEAVIAYLFLVNILPIMIIPILWYEARKIAKLFNDWDDFEVLYYQISGHSLPLKLRQKAVYIAIVLPILSVLSVVITHVTMSDLNINQVVPYCILDNLTAMLGAWWFLICEAMSITAHLLAERFQKALKHIGPAAMVADYRVLWLRLSKLTRDTGNALCYTFVFMSLYLFFIITLSIYGLMSQLSEGFGIKDIGLTITALWNIGLLFYICDEAHYASVNVRTNFQKKLLMVELNWMNSDAQTEINMFLRATEMNPSTINCGGFFDVNRTLFKGLLTTMVTYLVVLLQFQISIPTDKGDSEGANNITVVDFVMDSLDNDMSLMGASTLSTTTVGTTLPPPIMKLKGRKG.

The tract at residues 1-24 (MRPSGEKVVKGHGQGNSGHSLSGM) is disordered. Over 1–129 (MRPSGEKVVK…PARAKFEMNS (129 aa)) the chain is Cytoplasmic. Residues 130-150 (ASFIYSVVFFVLLACYVGYVA) traverse the membrane as a helical segment. At 151 to 166 (NNRIHIVRSLSGPFEE) the chain is on the extracellular side. Residues 167–187 (AVIAYLFLVNILPIMIIPILW) form a helical membrane-spanning segment. The Cytoplasmic segment spans residues 188-222 (YEARKIAKLFNDWDDFEVLYYQISGHSLPLKLRQK). Residues 223 to 243 (AVYIAIVLPILSVLSVVITHV) traverse the membrane as a helical segment. Residues 244 to 265 (TMSDLNINQVVPYCILDNLTAM) lie on the Extracellular side of the membrane. A glycan (N-linked (GlcNAc...) asparagine) is linked at N261. A helical membrane pass occupies residues 266-285 (LGAWWFLICEAMSITAHLLA). Residues 286-324 (ERFQKALKHIGPAAMVADYRVLWLRLSKLTRDTGNALCY) lie on the Cytoplasmic side of the membrane. Residues 325–345 (TFVFMSLYLFFIITLSIYGLM) form a helical membrane-spanning segment. Over 346 to 350 (SQLSE) the chain is Extracellular. The helical transmembrane segment at 351–371 (GFGIKDIGLTITALWNIGLLF) threads the bilayer. At 372–436 (YICDEAHYAS…FFDVNRTLFK (65 aa)) the chain is on the cytoplasmic side. A helical membrane pass occupies residues 437-457 (GLLTTMVTYLVVLLQFQISIP). Over 458-512 (TDKGDSEGANNITVVDFVMDSLDNDMSLMGASTLSTTTVGTTLPPPIMKLKGRKG) the chain is Extracellular. N468 carries N-linked (GlcNAc...) asparagine glycosylation.

The protein belongs to the insect chemoreceptor superfamily. Gustatory receptor (GR) family. Gr21a subfamily. In terms of assembly, gr21a and Gr63a probably form a heterodimer that responds to CO(2). In terms of tissue distribution, expressed in the medial aspect of the third antennal segment. Carbon dioxide-responsive neurons coexpress Gr21a and Gr63a in a pair of chemosensory receptors at both larval and adult life stages.

It is found in the cell membrane. In terms of biological role, gustatory and odorant receptor which mediates acceptance or avoidance behavior, depending on its substrates. Gr21a and Gr63a together are sufficient for carbon dioxide detection and avoidance behavior. It is possible that the CO(2) receptors Gr63a and Gr21a activate the TRPC channels through Galpha49B and Plc21C. This innate olfactory avoidance behavior can be inhibited by inhibitory interactions of the odors such as 1-hexanol and 2,3-butanedione with Gr21a and Gr63a. The polypeptide is Gustatory and odorant receptor 63a (Gr63a) (Drosophila melanogaster (Fruit fly)).